A 496-amino-acid chain; its full sequence is Glutamyl-tRNA(Gln) amidotransferase subunit A (496 aa).

Active-site charge relay system residues include lysine 75 and serine 150. Serine 174 (acyl-ester intermediate) is an active-site residue.

This sequence belongs to the amidase family. GatA subfamily. Heterotrimer of A, B and C subunits.

It carries out the reaction L-glutamyl-tRNA(Gln) + L-glutamine + ATP + H2O = L-glutaminyl-tRNA(Gln) + L-glutamate + ADP + phosphate + H(+). In terms of biological role, allows the formation of correctly charged Gln-tRNA(Gln) through the transamidation of misacylated Glu-tRNA(Gln) in organisms which lack glutaminyl-tRNA synthetase. The reaction takes place in the presence of glutamine and ATP through an activated gamma-phospho-Glu-tRNA(Gln). The polypeptide is Glutamyl-tRNA(Gln) amidotransferase subunit A (Burkholderia thailandensis (strain ATCC 700388 / DSM 13276 / CCUG 48851 / CIP 106301 / E264)).